We begin with the raw amino-acid sequence, 213 residues long: MIELNVTFDYEQMPMHFILQVAKAQRVAVVGESGAGKSTLLNLIAGFDLATSGQILLNEVDYTFAEVADRPVSMLFQENNVFPHLTVEQNIGLALVPRLHLTPQQQQAVKKIAGQMGIAELLLRRADQLSGGQKQRVALARTLLQDKPILLLDEPFSALDPIRRNELQQLVLEICRQRQLTLLMVTHQFSESEALFDRVIHIEQGRIVADQLL.

The region spanning 1-212 is the ABC transporter domain; it reads MIELNVTFDY…EQGRIVADQL (212 aa). Residue 31–38 coordinates ATP; sequence GESGAGKS.

This sequence belongs to the ABC transporter superfamily. Thiamine importer (TC 3.A.1.19.1) family. In terms of assembly, the complex is composed of two ATP-binding proteins (ThiQ), two transmembrane proteins (ThiP) and a solute-binding protein (ThiB).

The protein localises to the cell inner membrane. It carries out the reaction thiamine(out) + ATP + H2O = thiamine(in) + ADP + phosphate + H(+). In terms of biological role, part of the ABC transporter complex ThiBPQ involved in thiamine import. Responsible for energy coupling to the transport system. The sequence is that of Thiamine import ATP-binding protein ThiQ from Haemophilus ducreyi (strain 35000HP / ATCC 700724).